The chain runs to 200 residues: UPF0316 protein Mhun_0543 (200 aa).

3 helical membrane passes run 3-23 (VGFL…IFLA), 44-64 (FIAP…IGQV), and 71-91 (PICY…GMEL).

The protein belongs to the UPF0316 family.

It is found in the cell membrane. This Methanospirillum hungatei JF-1 (strain ATCC 27890 / DSM 864 / NBRC 100397 / JF-1) protein is UPF0316 protein Mhun_0543.